We begin with the raw amino-acid sequence, 600 residues long: Alpha-N-acetylgalactosaminide alpha-2,6-sialyltransferase 1 (600 aa).

Over 1–14 (MRSCLWRCRHLSQG) the chain is Cytoplasmic. The chain crosses the membrane as a helical; Signal-anchor for type II membrane protein span at residues 15-35 (VQWSLLLAVLVFFLFALPSFI). The Lumenal portion of the chain corresponds to 36–600 (KEPQTKPSRH…PGPGTAKAKN (565 aa)). Disordered stretches follow at residues 38–191 (PQTK…AATT) and 208–248 (GAVS…TQRN). The segment covering 46-55 (QRTENIKERS) has biased composition (basic and acidic residues). Polar residues-rich tracts occupy residues 84–94 (NALNTQTQPKA), 151–179 (TEAQ…ASRT), and 209–219 (AVSTRTRQKGV). Disulfide bonds link Cys-279–Cys-362 and Cys-365–Cys-533. N-linked (GlcNAc...) asparagine glycosylation is found at Asn-300, Asn-311, Asn-331, Asn-375, and Asn-460.

The protein belongs to the glycosyltransferase 29 family. Post-translationally, glycosylated; autosialylated. Expression is restricted to the gastrointestinal tract. Highly expressed in goblet cells. Also expressed in various tumor cells.

Its subcellular location is the golgi apparatus membrane. It carries out the reaction a beta-D-galactosyl-(1-&gt;3)-N-acetyl-alpha-D-galactosaminyl derivative + CMP-N-acetyl-beta-neuraminate = a beta-D-galactosyl-(1-&gt;3)-[N-acetyl-alpha-neuraminyl-(2-&gt;6)]-N-acetyl-alpha-D-galactosaminyl derivative + CMP + H(+). The enzyme catalyses a 3-O-[N-acetyl-alpha-D-galactosaminyl]-L-seryl-[protein] + CMP-N-acetyl-beta-neuraminate = a 3-O-[N-acetyl-alpha-neuraminosyl-(2-&gt;6)-N-acetyl-alpha-D-galactosaminyl]-L-seryl-[protein] + CMP + H(+). The catalysed reaction is a 3-O-[N-acetyl-alpha-D-galactosaminyl]-L-threonyl-[protein] + CMP-N-acetyl-beta-neuraminate = a 3-O-[N-acetyl-alpha-neuraminosyl-(2-&gt;6)-N-acetyl-alpha-D-galactosaminyl]-L-threonyl-[protein] + CMP + H(+). It catalyses the reaction a 3-O-[beta-D-galactosyl-(1-&gt;3)-N-acetyl-alpha-D-galactosaminyl]-L-seryl-[protein] + CMP-N-acetyl-beta-neuraminate = a 3-O-{beta-D-galactosyl-(1-&gt;3)-[N-acetyl-alpha-neuraminosyl-(2-&gt;6)]-N-acetyl-alpha-D-galactosaminyl}-L-seryl-[protein] + CMP + H(+). It carries out the reaction a 3-O-[beta-D-galactosyl-(1-&gt;3)-N-acetyl-alpha-D-galactosaminyl]-L-threonyl-[protein] + CMP-N-acetyl-beta-neuraminate = a 3-O-{beta-D-galactosyl-(1-&gt;3)-[N-acetyl-alpha-neuraminosyl-(2-&gt;6)]-N-acetyl-alpha-D-galactosaminyl}-L-threonyl-[protein] + CMP + H(+). The enzyme catalyses a 3-O-[N-acetyl-alpha-neuraminyl-(2-&gt;3)-beta-D-galactosyl-(1-&gt;3)-N-acetyl-alpha-D-galactosaminyl]-L-threonyl-[protein] + CMP-N-acetyl-beta-neuraminate = a 3-O-{alpha-Neu5Ac-(2-&gt;3)-beta-D-Gal-(1-&gt;3)-[alpha-Neu5Ac-(2-&gt;6)]-alpha-D-GalNAc}-L-threonyl-[protein] + CMP + H(+). Its pathway is protein modification; protein glycosylation. Its function is as follows. Protein sialyltransferase specifically expressed in goblet cells that plays a key role in intestinal host-commensal homeostasis. Conjugates sialic acid with an alpha-2-6 linkage to N-acetylgalactosamine (GalNAc) glycan chains linked to serine or threonine in glycoproteins. Catalyzes the formation of the sialyl-Tn (S-Tn) antigen, an antigen found in intestinal goblet cells, as well as ulcerative colitis (UC) and various cancers. Protein sialylation in globlet cells is essential for mucus integrity and is required to protect the intestinal mucus against excessive bacterial proteolytic degradation. The protein is Alpha-N-acetylgalactosaminide alpha-2,6-sialyltransferase 1 of Homo sapiens (Human).